Consider the following 378-residue polypeptide: 3-hydroxyisobutyryl-CoA hydrolase 1 (378 aa).

Position 2 is an N-acetylalanine (Ala2). Residues Glu94, Gly119, Glu142, and Asp150 each contribute to the substrate site.

It belongs to the enoyl-CoA hydratase/isomerase family. In terms of tissue distribution, expressed in roots, leaves, flowers and siliques.

It localises to the peroxisome. It catalyses the reaction 3-hydroxy-2-methylpropanoyl-CoA + H2O = 3-hydroxy-2-methylpropanoate + CoA + H(+). The protein operates within amino-acid degradation; L-valine degradation. Its activity is regulated as follows. Inhibited by copper. Its function is as follows. Involved in valine catabolism. May be indirectly involved in benzoic acid biosynthesis and in cold signaling and cold tolerance. This chain is 3-hydroxyisobutyryl-CoA hydrolase 1 (CHY1), found in Arabidopsis thaliana (Mouse-ear cress).